The sequence spans 234 residues: Transcriptional regulatory protein CitB (234 aa).

A Response regulatory domain is found at 5-121; sequence TTLIVEDEPM…RLQHTLERFA (117 aa). Aspartate 56 is modified (4-aspartylphosphate). The segment at residues 181–200 is a DNA-binding region (H-T-H motif); that stretch reads ADSLARILGSSKTTARRYLE.

In terms of assembly, in vitro CitB and the CitA kinase domain form a complex, formation of which is enhanced by ATP. In terms of processing, phosphorylated by CitA.

The protein resides in the cytoplasm. In terms of biological role, member of the two-component regulatory system CitA/CitB essential for expression of citrate-specific fermentation genes. Phosphorylated CitB binds to two sites in the citS-citC intergenic region where it probably activates transcription of both genes. This chain is Transcriptional regulatory protein CitB (citB), found in Klebsiella pneumoniae.